Reading from the N-terminus, the 230-residue chain is uncharacterized protein (230 aa).

Catalysis depends on charge relay system residues serine 124 and histidine 158.

Belongs to the peptidase S51 family.

This is an uncharacterized protein from Bacillus subtilis (strain 168).